A 315-amino-acid chain; its full sequence is Bifunctional pinoresinol-lariciresinol reductase (315 aa).

Residues 14-20, R39, and K48 contribute to the NADP(+) site; that span reads GGTGYLG. K142 (proton acceptor) is an active-site residue. NADP(+) is bound at residue R146. Residue H274 participates in substrate binding.

Belongs to the NmrA-type oxidoreductase family. Isoflavone reductase subfamily. Dimer.

It carries out the reaction (+)-lariciresinol + NADP(+) = (+)-pinoresinol + NADPH + H(+). The catalysed reaction is (-)-secoisolariciresinol + NADP(+) = (+)-lariciresinol + NADPH + H(+). Its function is as follows. Reductase involved in lignan (-)-hinokinin biosynthesis. Catalyzes the enantioselective conversion of (+)-pinoresinol into (+)-lariciresinol and of (+)-lariciresinol into (-)-secoisolariciresinol. Abstracts the 4R-hydride from the NADPH cofactor during catalysis. Has also a low phenylcoumaran benzylic ether reductase activity. The polypeptide is Bifunctional pinoresinol-lariciresinol reductase (PLR_Lc1) (Linum corymbulosum (Linum)).